We begin with the raw amino-acid sequence, 198 residues long: Ribonuclease HII (198 aa).

Residues 10-198 (QLVAGVDEVG…PVKRALGLAS (189 aa)) form the RNase H type-2 domain. 3 residues coordinate a divalent metal cation: D16, E17, and D108.

This sequence belongs to the RNase HII family. Mn(2+) serves as cofactor. The cofactor is Mg(2+).

It localises to the cytoplasm. The catalysed reaction is Endonucleolytic cleavage to 5'-phosphomonoester.. Functionally, endonuclease that specifically degrades the RNA of RNA-DNA hybrids. The sequence is that of Ribonuclease HII from Shigella dysenteriae serotype 1 (strain Sd197).